Consider the following 245-residue polypeptide: Ribonuclease PH (245 aa).

Residues Arg-93 and 131–133 each bind phosphate; that span reads GTR.

This sequence belongs to the RNase PH family. In terms of assembly, homohexameric ring arranged as a trimer of dimers.

It catalyses the reaction tRNA(n+1) + phosphate = tRNA(n) + a ribonucleoside 5'-diphosphate. Functionally, phosphorolytic 3'-5' exoribonuclease that plays an important role in tRNA 3'-end maturation. Removes nucleotide residues following the 3'-CCA terminus of tRNAs; can also add nucleotides to the ends of RNA molecules by using nucleoside diphosphates as substrates, but this may not be physiologically important. Probably plays a role in initiation of 16S rRNA degradation (leading to ribosome degradation) during starvation. The polypeptide is Ribonuclease PH (Corynebacterium glutamicum (strain R)).